An 824-amino-acid polypeptide reads, in one-letter code: Glycogen phosphorylase (824 aa).

Residue Lys-667 is modified to N6-(pyridoxal phosphate)lysine.

This sequence belongs to the glycogen phosphorylase family. It depends on pyridoxal 5'-phosphate as a cofactor.

The catalysed reaction is [(1-&gt;4)-alpha-D-glucosyl](n) + phosphate = [(1-&gt;4)-alpha-D-glucosyl](n-1) + alpha-D-glucose 1-phosphate. In terms of biological role, phosphorylase is an important allosteric enzyme in carbohydrate metabolism. Enzymes from different sources differ in their regulatory mechanisms and in their natural substrates. However, all known phosphorylases share catalytic and structural properties. The chain is Glycogen phosphorylase (glgP) from Chlamydia pneumoniae (Chlamydophila pneumoniae).